The chain runs to 298 residues: Urease accessory protein UreD 3 (298 aa).

Positions 1–30 (MADEAGTRSAGGRPIPAAEPLRPALSRQRS) are disordered.

It belongs to the UreD family. UreD, UreF and UreG form a complex that acts as a GTP-hydrolysis-dependent molecular chaperone, activating the urease apoprotein by helping to assemble the nickel containing metallocenter of UreC. The UreE protein probably delivers the nickel.

It is found in the cytoplasm. Required for maturation of urease via the functional incorporation of the urease nickel metallocenter. The protein is Urease accessory protein UreD 3 of Methylorubrum extorquens (strain PA1) (Methylobacterium extorquens).